Consider the following 359-residue polypeptide: 4-hydroxy-tetrahydrodipicolinate synthase, chloroplastic (359 aa).

A chloroplast-targeting transit peptide spans 1–33 (MSSSIIGRCHFVADSIEAAGTKRRTTRWRSPRA). Thr-102 is a binding site for pyruvate. Tyr-188 (proton donor/acceptor) is an active-site residue. Residue Lys-216 is the Schiff-base intermediate with substrate of the active site. Ile-255 is a pyruvate binding site.

It belongs to the DapA family.

The protein localises to the plastid. Its subcellular location is the chloroplast. It carries out the reaction L-aspartate 4-semialdehyde + pyruvate = (2S,4S)-4-hydroxy-2,3,4,5-tetrahydrodipicolinate + H2O + H(+). The protein operates within amino-acid biosynthesis; L-lysine biosynthesis via DAP pathway; (S)-tetrahydrodipicolinate from L-aspartate: step 3/4. Catalyzes the condensation of (S)-aspartate-beta-semialdehyde [(S)-ASA] and pyruvate to 4-hydroxy-tetrahydrodipicolinate (HTPA). The protein is 4-hydroxy-tetrahydrodipicolinate synthase, chloroplastic (DHPS1) of Nicotiana tabacum (Common tobacco).